The chain runs to 55 residues: Chromatin protein Cren7 (55 aa).

It belongs to the Cren7 family. In terms of assembly, monomer. Methylated at multiple sites, to varying extents.

The protein localises to the chromosome. It is found in the cytoplasm. Its function is as follows. A chromatin protein, binds double-stranded DNA without sequence specificity. Constrains negative DNA supercoils. The chain is Chromatin protein Cren7 from Ignicoccus hospitalis (strain KIN4/I / DSM 18386 / JCM 14125).